Here is a 283-residue protein sequence, read N- to C-terminus: MNIEIQYLELCREILAENEQEIAEGRWTPNRTGMGTVGVFGRMLKHDFKEGFPALTTKKLFFNSVKAELLWFLAGRTDLEFLHERGCHIWDKDAARNGGKLGPIYGKQWRAWEGADGRTYDQIAWVIQQIREIAADPERPHPNSRRLVVSPWNVADLEEMALPPCHGPFQFHVKDGRLHLAVWQRSADLFLGVPFNIASYSLLLHMVAQVTGLAVGTYTHYLNDVHIYRNLLDQVRLQLTREPYPLPRLWLNPEVREIDQFTMDDIQLVDYKHHPPIRGELST.

DUMP contacts are provided by residues arginine 31 and 145–146 (RR). Cysteine 165 (nucleophile) is an active-site residue. DUMP-binding positions include 185–188 (RSAD), asparagine 196, and 226–228 (HIY). Aspartate 188 lines the (6R)-5,10-methylene-5,6,7,8-tetrahydrofolate pocket. A (6R)-5,10-methylene-5,6,7,8-tetrahydrofolate-binding site is contributed by serine 282.

This sequence belongs to the thymidylate synthase family. Bacterial-type ThyA subfamily. Homodimer.

The protein resides in the cytoplasm. The catalysed reaction is dUMP + (6R)-5,10-methylene-5,6,7,8-tetrahydrofolate = 7,8-dihydrofolate + dTMP. The protein operates within pyrimidine metabolism; dTTP biosynthesis. Functionally, catalyzes the reductive methylation of 2'-deoxyuridine-5'-monophosphate (dUMP) to 2'-deoxythymidine-5'-monophosphate (dTMP) while utilizing 5,10-methylenetetrahydrofolate (mTHF) as the methyl donor and reductant in the reaction, yielding dihydrofolate (DHF) as a by-product. This enzymatic reaction provides an intracellular de novo source of dTMP, an essential precursor for DNA biosynthesis. This chain is Thymidylate synthase, found in Symbiobacterium thermophilum (strain DSM 24528 / JCM 14929 / IAM 14863 / T).